The sequence spans 1198 residues: DNA polymerase (1198 aa).

Disordered stretches follow at residues 1 to 87 (MALV…PRGT), 179 to 199 (LEQP…PNPP), and 904 to 930 (QLAL…PPSG). Composition is skewed to low complexity over residues 30–40 (QQPTRAAPAPA) and 57–68 (APPTSGGSPASP).

This sequence belongs to the DNA polymerase type-B family. In terms of assembly, heterodimer with the terminal protein; this heterodimer binds to bp 9 to 18 of the genome. Forms a complex with viral pTP, DBP and hosts NFIA and POU2F1/OCT1 for initiation of replication.

Its subcellular location is the host nucleus. The enzyme catalyses DNA(n) + a 2'-deoxyribonucleoside 5'-triphosphate = DNA(n+1) + diphosphate. Its function is as follows. Eukaryotic-type DNA polymerase involved in viral genomic replication. DNA synthesis is protein primed, and acts in a strand displacement replication. Assembles in complex with viral pTP, DBP, host NFIA and host POU2F1/OCT1 on viral origin of replication. The polymerase covalently transfers dCMP onto pTP, thereby initiating complementary strand synthesis. This Homo sapiens (Human) protein is DNA polymerase.